Here is a 306-residue protein sequence, read N- to C-terminus: Glutaminase (306 aa).

Residues serine 64, asparagine 115, glutamate 159, asparagine 166, tyrosine 190, tyrosine 242, and valine 260 each coordinate substrate.

It belongs to the glutaminase family. In terms of assembly, homotetramer.

The enzyme catalyses L-glutamine + H2O = L-glutamate + NH4(+). The chain is Glutaminase from Vibrio parahaemolyticus serotype O3:K6 (strain RIMD 2210633).